A 793-amino-acid chain; its full sequence is Phenylalanine--tRNA ligase beta subunit (793 aa).

Positions 39 to 154 (TCSFSSIITA…ENTPLGESAC (116 aa)) constitute a tRNA-binding domain. The B5 domain occupies 403–481 (PQASTLSFRT…QPWKVENKKA (79 aa)). Residues Asp-457, Asp-463, Glu-466, and Glu-467 each contribute to the Mg(2+) site. The region spanning 697–793 (PIYPSSFRDI…QINDTKGTID (97 aa)) is the FDX-ACB domain.

This sequence belongs to the phenylalanyl-tRNA synthetase beta subunit family. Type 1 subfamily. Tetramer of two alpha and two beta subunits. It depends on Mg(2+) as a cofactor.

The protein resides in the cytoplasm. The enzyme catalyses tRNA(Phe) + L-phenylalanine + ATP = L-phenylalanyl-tRNA(Phe) + AMP + diphosphate + H(+). The protein is Phenylalanine--tRNA ligase beta subunit of Chlamydia caviae (strain ATCC VR-813 / DSM 19441 / 03DC25 / GPIC) (Chlamydophila caviae).